Reading from the N-terminus, the 253-residue chain is MFAIALLSFLVVLINAHPPMHAEMHSAVVTLANEIDTNYLTSPAKIKIVAPLESALIPGGETYQLRCDIMSTPAATIHWKFNGKLIQGSNELNVEEKLLNFGKAIVDTGIVASILTIQCPSAENSGTYSCVGYNGHQTIETVAEVEIEGEASGCRSNHKSAPEIVFWTDSRFEMTGNVATLVCRANQQVDWVWMSNDELVKNNDKFTVLSNGDLVIKNIVWDDMGTYTCIARNQFGEARQETFLYPTAKKSSF.

The N-terminal stretch at 1–16 (MFAIALLSFLVVLINA) is a signal peptide. 2 consecutive Ig-like C2-type domains span residues 43–146 (PAKI…AEVE) and 162–245 (PEIV…TFLY). 2 disulfides stabilise this stretch: Cys67–Cys130 and Cys183–Cys229.

Expressed in PVT, ASK, BAG, M2 and ASI neurons. In L1 larvae, expressed in pharyngeal ectoderm and mesoderm.

Its subcellular location is the secreted. Required for maintaining axon position of PVQ and PVP neurons postembryonically in the ventral nerve cord (VNC) by preventing axons drifting into the opposite side of the VNC that could occur during body growth and movement. This chain is Zwei Ig domain protein zig-4, found in Caenorhabditis elegans.